Consider the following 529-residue polypeptide: Peptide chain release factor 3 (529 aa).

One can recognise a tr-type G domain in the interval 11–280 (AARRTFAIIS…GLVAWAPPPM (270 aa)). GTP is bound by residues 20-27 (SHPDAGKT), 88-92 (DTPGH), and 142-145 (NKVD).

Belongs to the TRAFAC class translation factor GTPase superfamily. Classic translation factor GTPase family. PrfC subfamily.

The protein localises to the cytoplasm. Functionally, increases the formation of ribosomal termination complexes and stimulates activities of RF-1 and RF-2. It binds guanine nucleotides and has strong preference for UGA stop codons. It may interact directly with the ribosome. The stimulation of RF-1 and RF-2 is significantly reduced by GTP and GDP, but not by GMP. This Sodalis glossinidius (strain morsitans) protein is Peptide chain release factor 3.